The chain runs to 228 residues: E3 ubiquitin-protein ligase RNF114 (228 aa).

The RING-type zinc finger occupies 29–68; the sequence is CPVCLEVYEKPVQVPCGHVFCSACLQECLKPKKPVCGVCR. Cys91 and Cys94 together coordinate Zn(2+). The C2HC RNF-type zinc finger occupies 91-110; the sequence is CHGCRKNFFLSKIRAHVATC. An N6-acetyllysine modification is found at Lys102. The Zn(2+) site is built by His106 and Cys110. At Lys112 the chain carries N6-acetyllysine.

Interacts with XAF1, the interaction increases XAF1 stability and proapoptotic effects, and may regulate IFN signaling. Post-translationally, autoubiquitinated. Polyubiquitinated in the presence of E2 enzymes UBE2D1, UBE2D2 and UBE2D3, but only monoubiquitinated in the presence of UBE2E1.

The protein resides in the cytoplasm. It is found in the nucleus. It carries out the reaction S-ubiquitinyl-[E2 ubiquitin-conjugating enzyme]-L-cysteine + [acceptor protein]-L-lysine = [E2 ubiquitin-conjugating enzyme]-L-cysteine + N(6)-ubiquitinyl-[acceptor protein]-L-lysine.. It participates in protein modification; protein ubiquitination. Its function is as follows. E3 ubiquitin-protein ligase that promotes the ubiquitination of various substrates. In turn, participates in the regulation of many biological processes including cell cycle, apoptosis, osteoclastogenesis as well as innate or adaptive immunity. Acts as negative regulator of NF-kappa-B-dependent transcription by promoting the ubiquitination and stabilization of the NF-kappa-B inhibitor TNFAIP3. May promote the ubiquitination of TRAF6 as well. Also acts as a negative regulator of T-cell activation. Inhibits cellular dsRNA responses and interferon production by targeting MAVS component for proteasomal degradation. Ubiquitinates the CDK inhibitor CDKN1A leading to its degradationand probably also CDKN1B and CDKN1C. This activity stimulates cell cycle G1-to-S phase transition and suppresses cellular senescence. May play a role in spermatogenesis. Inhibits classical swine fever virus replication by mediating 'K27'-linked ubiquitination of viral NS4B and inducing its degradation via the proteasome. This chain is E3 ubiquitin-protein ligase RNF114 (RNF114), found in Sus scrofa (Pig).